The chain runs to 334 residues: Nucleoid-associated protein PMI0825 (334 aa).

The protein belongs to the YejK family.

The protein localises to the cytoplasm. It localises to the nucleoid. This Proteus mirabilis (strain HI4320) protein is Nucleoid-associated protein PMI0825.